The following is a 526-amino-acid chain: Glutamate--tRNA ligase, mitochondrial (526 aa).

The N-terminal 38 residues, 1–38 (MLSYTSCAKLICSRYIVSKISFYSLKRCNSTAVVRTRF), are a transit peptide targeting the mitochondrion. L-glutamate is bound at residue 37-39 (RFA). A 'HIGH' region motif is present at residues 42–50 (PTGFLHLGS). An ATP-binding site is contributed by His-47. Residues Glu-73, 222–226 (YHFAN), and Arg-240 contribute to the L-glutamate site. ATP is bound by residues Glu-243 and 278–282 (KLSKR). The 'KMSKS' region motif lies at 278–282 (KLSKR).

The protein belongs to the class-I aminoacyl-tRNA synthetase family. Glutamate--tRNA ligase type 1 subfamily.

Its subcellular location is the mitochondrion. It carries out the reaction tRNA(Glu) + L-glutamate + ATP = L-glutamyl-tRNA(Glu) + AMP + diphosphate. Catalyzes the attachment of glutamate to tRNA(Glu) in a two-step reaction: glutamate is first activated by ATP to form Glu-AMP and then transferred to the acceptor end of tRNA(Glu). This chain is Glutamate--tRNA ligase, mitochondrial (mse1), found in Schizosaccharomyces pombe (strain 972 / ATCC 24843) (Fission yeast).